Here is a 156-residue protein sequence, read N- to C-terminus: Cytochrome c-type biogenesis protein CcmE 1 (156 aa).

Over 1–8 the chain is Cytoplasmic; that stretch reads MNATRRQR. The chain crosses the membrane as a helical; Signal-anchor for type II membrane protein span at residues 9 to 29; the sequence is LWWVICVLTAAALAVTLIVFA. The Periplasmic segment spans residues 30 to 156; the sequence is LQRNMSYLFT…ATATPLTAPR (127 aa). Heme contacts are provided by H123 and Y127. The disordered stretch occupies residues 137 to 156; the sequence is AEGHAGKPIPATATPLTAPR. Low complexity predominate over residues 146–156; sequence PATATPLTAPR.

This sequence belongs to the CcmE/CycJ family.

It localises to the cell inner membrane. In terms of biological role, heme chaperone required for the biogenesis of c-type cytochromes. Transiently binds heme delivered by CcmC and transfers the heme to apo-cytochromes in a process facilitated by CcmF and CcmH. The polypeptide is Cytochrome c-type biogenesis protein CcmE 1 (Xanthomonas euvesicatoria pv. vesicatoria (strain 85-10) (Xanthomonas campestris pv. vesicatoria)).